The sequence spans 356 residues: Putative mitogen-activated protein kinase 14C (356 aa).

Positions 20-305 (YEFVRFLGGG…AAEAMLHPYL (286 aa)) constitute a Protein kinase domain. Residues 26–34 (LGGGSFGQV) and Lys-49 contribute to the ATP site. Catalysis depends on Asp-147, which acts as the Proton acceptor. Position 177 is a phosphothreonine (Thr-177).

The protein belongs to the protein kinase superfamily. CMGC Ser/Thr protein kinase family. MAP kinase subfamily. The cofactor is Mg(2+). In terms of processing, the phosphorylation on Thr-177 activates the enzyme. A conserved Tyr, which must also be phosphorylated to activate the enzyme in closely related sequences, is replaced by His-179 in this sequence.

It carries out the reaction L-seryl-[protein] + ATP = O-phospho-L-seryl-[protein] + ADP + H(+). The enzyme catalyses L-threonyl-[protein] + ATP = O-phospho-L-threonyl-[protein] + ADP + H(+). Functionally, kinase involved in a signal transduction pathway. The sequence is that of Putative mitogen-activated protein kinase 14C (p38c) from Drosophila melanogaster (Fruit fly).